Consider the following 141-residue polypeptide: Putative antiporter subunit mnhB2 (141 aa).

4 helical membrane passes run 10–30, 35–55, 70–90, and 114–134; these read TVTK…FFAG, GGGF…FLAF, ILMI…TFFG, and ITLF…TVML.

Belongs to the CPA3 antiporters (TC 2.A.63) subunit B family. In terms of assembly, may form a heterooligomeric complex that consists of seven subunits: mnhA2, mnhB2, mnhC2, mnhD2, mnhE2, mnhF2 and mnhG2.

The protein resides in the cell membrane. This is Putative antiporter subunit mnhB2 (mnhB2) from Staphylococcus aureus (strain MRSA252).